The following is a 198-amino-acid chain: FMN-dependent NADH:quinone oxidoreductase (198 aa).

FMN is bound by residues Ser10, 16-18 (SQS), 94-97 (MYNF), and 138-141 (TRGG).

The protein belongs to the azoreductase type 1 family. In terms of assembly, homodimer. The cofactor is FMN.

The catalysed reaction is 2 a quinone + NADH + H(+) = 2 a 1,4-benzosemiquinone + NAD(+). It catalyses the reaction N,N-dimethyl-1,4-phenylenediamine + anthranilate + 2 NAD(+) = 2-(4-dimethylaminophenyl)diazenylbenzoate + 2 NADH + 2 H(+). Its function is as follows. Quinone reductase that provides resistance to thiol-specific stress caused by electrophilic quinones. Functionally, also exhibits azoreductase activity. Catalyzes the reductive cleavage of the azo bond in aromatic azo compounds to the corresponding amines. This Shewanella baltica (strain OS185) protein is FMN-dependent NADH:quinone oxidoreductase.